A 288-amino-acid polypeptide reads, in one-letter code: ATP synthase gamma chain (288 aa).

Belongs to the ATPase gamma chain family. In terms of assembly, F-type ATPases have 2 components, CF(1) - the catalytic core - and CF(0) - the membrane proton channel. CF(1) has five subunits: alpha(3), beta(3), gamma(1), delta(1), epsilon(1). CF(0) has three main subunits: a, b and c.

The protein resides in the cell membrane. Produces ATP from ADP in the presence of a proton gradient across the membrane. The gamma chain is believed to be important in regulating ATPase activity and the flow of protons through the CF(0) complex. The protein is ATP synthase gamma chain of Staphylococcus haemolyticus (strain JCSC1435).